A 59-amino-acid chain; its full sequence is Large ribosomal subunit protein uL30 (59 aa).

It belongs to the universal ribosomal protein uL30 family. Part of the 50S ribosomal subunit.

The protein is Large ribosomal subunit protein uL30 of Lactococcus lactis subsp. lactis (strain IL1403) (Streptococcus lactis).